A 241-amino-acid chain; its full sequence is 1-(5-phosphoribosyl)-5-[(5-phosphoribosylamino)methylideneamino] imidazole-4-carboxamide isomerase (241 aa).

Residue Asp-8 is the Proton acceptor of the active site. Residue Asp-129 is the Proton donor of the active site.

Belongs to the HisA/HisF family.

The protein localises to the cytoplasm. The catalysed reaction is 1-(5-phospho-beta-D-ribosyl)-5-[(5-phospho-beta-D-ribosylamino)methylideneamino]imidazole-4-carboxamide = 5-[(5-phospho-1-deoxy-D-ribulos-1-ylimino)methylamino]-1-(5-phospho-beta-D-ribosyl)imidazole-4-carboxamide. It participates in amino-acid biosynthesis; L-histidine biosynthesis; L-histidine from 5-phospho-alpha-D-ribose 1-diphosphate: step 4/9. This chain is 1-(5-phosphoribosyl)-5-[(5-phosphoribosylamino)methylideneamino] imidazole-4-carboxamide isomerase, found in Chloroflexus aggregans (strain MD-66 / DSM 9485).